Consider the following 430-residue polypeptide: Zinc carboxypeptidase A 1 (430 aa).

The signal sequence occupies residues 1–22 (MSLNKCLLFALLAIVASASVSA). Residues 124–423 (QYYELDDTYA…DSIVAMATEV (300 aa)) form the Peptidase M14 domain. Residues histidine 187 and glutamate 190 each coordinate Zn(2+). Cysteine 252 and cysteine 275 are disulfide-bonded. Histidine 311 is a binding site for Zn(2+). Glutamate 386 serves as the catalytic Proton donor/acceptor.

This sequence belongs to the peptidase M14 family. Zn(2+) is required as a cofactor.

The protein resides in the secreted. The polypeptide is Zinc carboxypeptidase A 1 (Drosophila melanogaster (Fruit fly)).